Reading from the N-terminus, the 137-residue chain is Acidic phospholipase A2 VP8 (137 aa).

An N-terminal signal peptide occupies residues 1-16 (MRILWIVAVCLIGVEG). 7 disulfides stabilise this stretch: C41–C130, C43–C59, C58–C110, C64–C137, C65–C103, C72–C96, and C90–C101. Ca(2+) contacts are provided by Y42, G44, and G46. Residue H62 is part of the active site. D63 serves as a coordination point for Ca(2+). The active site involves D104.

It belongs to the phospholipase A2 family. Group II subfamily. D49 sub-subfamily. As to quaternary structure, does not form a complex. It depends on Ca(2+) as a cofactor. In terms of tissue distribution, expressed by the venom gland.

The protein resides in the secreted. It catalyses the reaction a 1,2-diacyl-sn-glycero-3-phosphocholine + H2O = a 1-acyl-sn-glycero-3-phosphocholine + a fatty acid + H(+). In terms of biological role, snake venom phospholipase A2 (PLA2) that is not toxic by itself, but the synergistical mixture of a basic and this acidic protein is lethal. PLA2 catalyzes the calcium-dependent hydrolysis of the 2-acyl groups in 3-sn-phosphoglycerides. The polypeptide is Acidic phospholipase A2 VP8 (Daboia palaestinae (Palestine viper)).